The following is an 807-amino-acid chain: Sucrose synthase 2 (807 aa).

A GT-B glycosyltransferase region spans residues 274–752 (MVFNVVILSP…GLKRIYERYT (479 aa)).

Belongs to the glycosyltransferase 1 family. Plant sucrose synthase subfamily. In terms of tissue distribution, detected in the whole plant but at lower levels. Predominantly expressed in developing siliques. Also detected in the root tip. Detected in the embryo, endosperm and seed coat (at the protein level).

It is found in the cytoplasm. Its subcellular location is the plastid membrane. It catalyses the reaction an NDP-alpha-D-glucose + D-fructose = a ribonucleoside 5'-diphosphate + sucrose + H(+). Its function is as follows. Sucrose-cleaving enzyme that provides UDP-glucose and fructose for various metabolic pathways. Modulates metabolic homeostasis and directs carbon towards starch synthesis in developing seeds. The chain is Sucrose synthase 2 (SUS2) from Arabidopsis thaliana (Mouse-ear cress).